The primary structure comprises 79 residues: Beta-hexatoxin-Mg1a (79 aa).

Positions methionine 1–alanine 20 are cleaved as a signal peptide. The propeptide occupies threonine 21–arginine 50. Cystine bridges form between cysteine 52–cysteine 66, cysteine 59–cysteine 71, and cysteine 65–cysteine 76.

This sequence belongs to the neurotoxin 15 family. 01 (magi-5) subfamily. As to expression, expressed by the venom gland.

Its subcellular location is the secreted. Functionally, insect and vertebrate active toxin. Binds to site 4 of mammalian voltage-gated sodium channels and shifts the activation voltage of the mammalian Nav1.2a/SCN2A channel to more hyperpolarized voltages, whereas the insect channel, DmNav1 (para), is not affected. Competes for binding at site 3 of the insect sodium channel. Causes temporary paralysis when injected into lepidopteran larvae at 8.6 nmol/g. A low intracranial injection dose into mice causes lacrimation, closure of the eyes and sweating. A high injection dose causes extensive lacrimation and death. The polypeptide is Beta-hexatoxin-Mg1a (Macrothele gigas (Japanese funnel web spider)).